The sequence spans 20 residues: Hongotoxin-5 (20 aa).

This sequence belongs to the short scorpion toxin superfamily. Potassium channel inhibitor family. Alpha-KTx 02 subfamily. As to expression, expressed by the venom gland.

The protein resides in the secreted. Potent selective inhibitor of Kv1/KCNA voltage-gated potassium channels. The protein is Hongotoxin-5 of Centruroides limbatus (Bark scorpion).